The following is a 331-amino-acid chain: Putative phosphoribosylaminoimidazole-succinocarboxamide synthase (331 aa).

It belongs to the SAICAR synthetase family. Highly divergent.

The catalysed reaction is 5-amino-1-(5-phospho-D-ribosyl)imidazole-4-carboxylate + L-aspartate + ATP = (2S)-2-[5-amino-1-(5-phospho-beta-D-ribosyl)imidazole-4-carboxamido]succinate + ADP + phosphate + 2 H(+). The protein operates within purine metabolism; IMP biosynthesis via de novo pathway; 5-amino-1-(5-phospho-D-ribosyl)imidazole-4-carboxamide from 5-amino-1-(5-phospho-D-ribosyl)imidazole-4-carboxylate: step 1/2. The sequence is that of Putative phosphoribosylaminoimidazole-succinocarboxamide synthase (purC) from Archaeoglobus fulgidus (strain ATCC 49558 / DSM 4304 / JCM 9628 / NBRC 100126 / VC-16).